The chain runs to 309 residues: Methionyl-tRNA formyltransferase (309 aa).

109–112 (SLLP) is a binding site for (6S)-5,6,7,8-tetrahydrofolate.

Belongs to the Fmt family.

It carries out the reaction L-methionyl-tRNA(fMet) + (6R)-10-formyltetrahydrofolate = N-formyl-L-methionyl-tRNA(fMet) + (6S)-5,6,7,8-tetrahydrofolate + H(+). In terms of biological role, attaches a formyl group to the free amino group of methionyl-tRNA(fMet). The formyl group appears to play a dual role in the initiator identity of N-formylmethionyl-tRNA by promoting its recognition by IF2 and preventing the misappropriation of this tRNA by the elongation apparatus. The protein is Methionyl-tRNA formyltransferase of Clostridium perfringens (strain SM101 / Type A).